A 98-amino-acid chain; its full sequence is Large ribosomal subunit protein uL23 (98 aa).

This sequence belongs to the universal ribosomal protein uL23 family. In terms of assembly, part of the 50S ribosomal subunit. Contacts protein L29, and trigger factor when it is bound to the ribosome.

Functionally, one of the early assembly proteins it binds 23S rRNA. One of the proteins that surrounds the polypeptide exit tunnel on the outside of the ribosome. Forms the main docking site for trigger factor binding to the ribosome. The sequence is that of Large ribosomal subunit protein uL23 from Cellvibrio japonicus (strain Ueda107) (Pseudomonas fluorescens subsp. cellulosa).